The following is a 482-amino-acid chain: tRNA sulfurtransferase (482 aa).

The region spanning 61–165 (LAIRDALTRI…DDRLLLIKGR (105 aa)) is the THUMP domain. ATP-binding positions include 183 to 184 (LI), Lys265, Gly287, and Gln296. A disulfide bond links Cys344 and Cys456. Residues 404-482 (FGANDVILDI…GFANVKVYRP (79 aa)) form the Rhodanese domain. The Cysteine persulfide intermediate role is filled by Cys456.

The protein belongs to the ThiI family.

It localises to the cytoplasm. The enzyme catalyses [ThiI sulfur-carrier protein]-S-sulfanyl-L-cysteine + a uridine in tRNA + 2 reduced [2Fe-2S]-[ferredoxin] + ATP + H(+) = [ThiI sulfur-carrier protein]-L-cysteine + a 4-thiouridine in tRNA + 2 oxidized [2Fe-2S]-[ferredoxin] + AMP + diphosphate. The catalysed reaction is [ThiS sulfur-carrier protein]-C-terminal Gly-Gly-AMP + S-sulfanyl-L-cysteinyl-[cysteine desulfurase] + AH2 = [ThiS sulfur-carrier protein]-C-terminal-Gly-aminoethanethioate + L-cysteinyl-[cysteine desulfurase] + A + AMP + 2 H(+). Its pathway is cofactor biosynthesis; thiamine diphosphate biosynthesis. In terms of biological role, catalyzes the ATP-dependent transfer of a sulfur to tRNA to produce 4-thiouridine in position 8 of tRNAs, which functions as a near-UV photosensor. Also catalyzes the transfer of sulfur to the sulfur carrier protein ThiS, forming ThiS-thiocarboxylate. This is a step in the synthesis of thiazole, in the thiamine biosynthesis pathway. The sulfur is donated as persulfide by IscS. This Salmonella arizonae (strain ATCC BAA-731 / CDC346-86 / RSK2980) protein is tRNA sulfurtransferase.